A 595-amino-acid polypeptide reads, in one-letter code: Miltiradiene synthase KSL1, chloroplastic (595 aa).

Residues 1 to 47 (MSLAFNPAATAFSGNGARSRRENFPVKHVTVRGFPMITNKSSFAVKC) constitute a chloroplast transit peptide. Residues aspartate 334, aspartate 338, asparagine 478, and glutamate 486 each contribute to the Mg(2+) site. The DDXXD motif motif lies at 334–338 (DDFFD).

The protein belongs to the terpene synthase family. It depends on Mg(2+) as a cofactor.

It is found in the plastid. The protein localises to the chloroplast. It catalyses the reaction (+)-copalyl diphosphate = miltiradiene + diphosphate. Its pathway is secondary metabolite biosynthesis; terpenoid biosynthesis. Involved in tanshinone biosynthesis in hairy roots. Catalyzes the conversion of copalyl diphosphate (CPP) to miltiradiene. The sequence is that of Miltiradiene synthase KSL1, chloroplastic from Salvia miltiorrhiza (Chinese sage).